The following is a 126-amino-acid chain: Histone H2B 8 (126 aa).

Low complexity predominate over residues 1–12 (MPEPAKSAPAPK). The tract at residues 1-35 (MPEPAKSAPAPKKGSKKAVTKTQKKGDKKRRKTRK) is disordered. N6-acetyllysine occurs at positions 6 and 13. The span at 13–34 (KGSKKAVTKTQKKGDKKRRKTR) shows a compositional bias: basic residues. Ser-15 carries the phosphoserine modification. An N6-acetyllysine mark is found at Lys-16 and Lys-21. The O-linked (GlcNAc) serine glycan is linked to Ser-113. Residue Lys-121 forms a Glycyl lysine isopeptide (Lys-Gly) (interchain with G-Cter in ubiquitin) linkage.

This sequence belongs to the histone H2B family. The nucleosome is a histone octamer containing two molecules each of H2A, H2B, H3 and H4 assembled in one H3-H4 heterotetramer and two H2A-H2B heterodimers. The octamer wraps approximately 147 bp of DNA. In terms of processing, monoubiquitination of Lys-121 by the BRE1 gives a specific tag for epigenetic transcriptional activation and is also prerequisite for histone H3 'Lys-4' and 'Lys-79' methylation. Phosphorylated on Ser-15 during apoptosis; which facilitates apoptotic chromatin condensation. Post-translationally, glcNAcylation at Ser-113 promotes monoubiquitination of Lys-121. It fluctuates in response to extracellular glucose, and associates with transcribed genes.

Its subcellular location is the nucleus. It is found in the chromosome. Core component of nucleosome. Nucleosomes wrap and compact DNA into chromatin, limiting DNA accessibility to the cellular machineries which require DNA as a template. Histones thereby play a central role in transcription regulation, DNA repair, DNA replication and chromosomal stability. DNA accessibility is regulated via a complex set of post-translational modifications of histones, also called histone code, and nucleosome remodeling. The polypeptide is Histone H2B 8 (H2B-VIII) (Gallus gallus (Chicken)).